Here is a 239-residue protein sequence, read N- to C-terminus: Type III pantothenate kinase (239 aa).

An ATP-binding site is contributed by aspartate 6–lysine 13. Residues tyrosine 87 and glycine 94–arginine 97 contribute to the substrate site. The active-site Proton acceptor is the aspartate 96. ATP is bound at residue threonine 119. Serine 169 is a substrate binding site.

This sequence belongs to the type III pantothenate kinase family. As to quaternary structure, homodimer. NH4(+) serves as cofactor. Requires K(+) as cofactor.

Its subcellular location is the cytoplasm. It carries out the reaction (R)-pantothenate + ATP = (R)-4'-phosphopantothenate + ADP + H(+). It participates in cofactor biosynthesis; coenzyme A biosynthesis; CoA from (R)-pantothenate: step 1/5. In terms of biological role, catalyzes the phosphorylation of pantothenate (Pan), the first step in CoA biosynthesis. In Laribacter hongkongensis (strain HLHK9), this protein is Type III pantothenate kinase.